The primary structure comprises 442 residues: Threonine/serine transporter TdcC (442 aa).

The next 11 helical transmembrane spans lie at 21 to 41 (TTWT…FFPI), 44 to 64 (GFGG…IAFL), 96 to 116 (GVVI…IYGV), 139 to 159 (VVAL…KDLM), 162 to 182 (VMSF…LSLI), 206 to 226 (ILVT…FSPI), 258 to 278 (ASIL…FTLS), 312 to 332 (ITLE…SFFG), 364 to 384 (LISM…NPNI), 388 to 408 (IEAM…MYAI), and 422 to 442 (ENYF…YKLL).

It belongs to the amino acid/polyamine transporter 2 family. SdaC/TdcC subfamily.

Its subcellular location is the cell inner membrane. It carries out the reaction L-threonine(in) + H(+)(in) = L-threonine(out) + H(+)(out). The catalysed reaction is L-serine(in) + H(+)(in) = L-serine(out) + H(+)(out). In terms of biological role, involved in the import of threonine and serine into the cell, with the concomitant import of a proton (symport system). The protein is Threonine/serine transporter TdcC of Yersinia enterocolitica serotype O:8 / biotype 1B (strain NCTC 13174 / 8081).